Here is a 511-residue protein sequence, read N- to C-terminus: Glucose-6-phosphate 1-dehydrogenase (511 aa).

Residues 29 to 36 (GASGDLAK), arginine 63, and lysine 164 contribute to the NADP(+) site. D-glucose 6-phosphate-binding positions include lysine 164, 194-198 (HYLGK), glutamate 232, and aspartate 251. The Proton acceptor role is filled by histidine 256. Lysine 347 lines the NADP(+) pocket. Lysine 350 serves as a coordination point for D-glucose 6-phosphate. NADP(+)-binding residues include lysine 356, arginine 360, and arginine 382. Glutamine 384 contacts D-glucose 6-phosphate. NADP(+) contacts are provided by residues 390–392 (YIK), 410–412 (DLT), and arginine 477.

Belongs to the glucose-6-phosphate dehydrogenase family.

The catalysed reaction is D-glucose 6-phosphate + NADP(+) = 6-phospho-D-glucono-1,5-lactone + NADPH + H(+). The protein operates within carbohydrate degradation; pentose phosphate pathway; D-ribulose 5-phosphate from D-glucose 6-phosphate (oxidative stage): step 1/3. Functionally, catalyzes the rate-limiting step of the oxidative pentose-phosphate pathway, which represents a route for the dissimilation of carbohydrates besides glycolysis. The main function of this enzyme is to provide reducing power (NADPH) and pentose phosphates for fatty acid and nucleic acid synthesis. This chain is Glucose-6-phosphate 1-dehydrogenase (gsdA), found in Emericella nidulans (strain FGSC A4 / ATCC 38163 / CBS 112.46 / NRRL 194 / M139) (Aspergillus nidulans).